A 426-amino-acid polypeptide reads, in one-letter code: Potassium channel subfamily K member 2 (426 aa).

The Cytoplasmic portion of the chain corresponds to 1–61 (MLPSASRERP…TTINVMKWKT (61 aa)). 2 important for GNG4 binding and L-glutamate release in astrocytes regions span residues 17–38 (AAPD…LSFS) and 51–61 (DTTINVMKWKT). A helical transmembrane segment spans residues 62–82 (VSTIFLVVVLYLIIGATVFKA). Residues Asn-110 and Asn-134 are each glycosylated (N-linked (GlcNAc...) asparagine). Residues 144 to 170 (LGSSFFFAGTVITTIGFGNISPRTEGG) constitute an intramembrane region (pore-forming). K(+) contacts are provided by Thr-157, Ile-158, Gly-159, and Phe-160. The selectivity filter 1 stretch occupies residues 157 to 162 (TIGFGN). The chain crosses the membrane as a helical span at residues 172–192 (IFCIIYALLGIPLFGFLLAGV). Over 193–223 (GDQLGTIFGKGIAKVEDTFIKWNVSQTKIRI) the chain is Cytoplasmic. Residues 224-244 (ISTIIFILFGCVLFVALPAII) traverse the membrane as a helical segment. The pore-forming intramembrane region spans 253–283 (ALDAIYFVVITLTTIGFGDYVAGGSDIEYLD). Thr-266, Ile-267, Gly-268, and Phe-269 together coordinate K(+). The segment at 266-271 (TIGFGD) is selectivity filter 2. A helical transmembrane segment spans residues 288–308 (VVWFWILVGLAYFAAVLSMIG). Topologically, residues 309 to 426 (DWLRVISKKT…EEIAVIENIK (118 aa)) are cytoplasmic. An interaction with AKAP5 region spans residues 313–326 (VISKKTKEEVGEFR). The interval 337–385 (TAEFKETRRRLSVEIYDKFQRATSIKRKLSAELAGNHNQELTPCRRTLS) is essential for chloroform and halothane sensitivity. Phosphoserine; by PKA is present on Ser-348.

The protein belongs to the two pore domain potassium channel (TC 1.A.1.8) family. As to quaternary structure, homodimer; disulfide-linked. Forms heterodimers with other 2-pore domain K(+) channel subunits, such as KCNK1, KCNK4, KCNK10 and KCNK18. Interacts with AKAP5; the channel is recruited to postsynaptic microdomains by AKAP5 where it can integrate neurotransmitter receptor signals. Part of a complex composed of AKAP5 and ADRB2. Upon AKAP5 binding, the channel is no longer sensitive to intracellular acidification, membrane stretch or arachidonic acid stimuli. Interacts with POPDC1; the interaction enhances KCNK2 surface expression and is inhibited by cAMP. Interacts (via N-terminus) with G-protein subunit GNG4 (via C-terminus); this interaction confers ion selectivity to L-glutamate and Cl(-) anions. In terms of processing, phosphorylation at Ser-348 controls the reversible conversion from a leak channel to a voltage-dependent channel. Detected in kidney, adrenal gland and brain where it is preferentially expressed in the amygdala but not found in thalamus, hypothalamus, hippocampus or substantia nigra.

The protein localises to the cell membrane. It localises to the endoplasmic reticulum membrane. It is found in the cell projection. The protein resides in the axon. Its subcellular location is the dendrite. The protein localises to the postsynaptic density membrane. It localises to the sarcolemma. The catalysed reaction is K(+)(in) = K(+)(out). It catalyses the reaction L-glutamate(out) = L-glutamate(in). The enzyme catalyses chloride(in) = chloride(out). It carries out the reaction Rb(+)(in) = Rb(+)(out). The catalysed reaction is Cs(+)(in) = Cs(+)(out). Activated by various stimuli including intracellular acidic pH, mechanical stretch and polyunsaturated fatty acids such as arachidonic acid. Activated by volatile anesthetics such as chloroform, halothane, and isoflurane. Its function is as follows. K(+) channel that conducts voltage-dependent outward rectifying currents upon membrane depolarization. Voltage sensing is coupled to K(+) electrochemical gradient in an 'ion flux gating' mode where outward but not inward ion flow opens the gate. Converts to voltage-independent 'leak' conductance mode upon stimulation by various stimuli including mechanical membrane stretch, acidic pH, heat and lipids. Reversibly converts between a voltage-insensitive K(+) 'leak' channel and a voltage-dependent outward rectifying K(+) channel in a phosphorylation-dependent manner. Homo- and heterodimerizes to form functional channels with distinct regulatory and gating properties. In trigeminal ganglia sensory neurons, the heterodimer of KCNK2/TREK-1 and KCNK18/TRESK inhibits neuronal firing and neurogenic inflammation by stabilizing the resting membrane potential at K(+) equilibrium potential as well as by regulating the threshold of action potentials and the spike frequency. At trigeminal A-beta afferent nerves, the heterodimer of KCNK2/TREK-1 and KCNK4/TRAAK is mostly coexpressed at nodes of Ranvier where it conducts voltage-independent mechanosensitive and thermosensitive currents, allowing rapid action potential repolarization, high speed and high frequence saltatory conduction on myelinated nerves to ensure prompt sensory responses. In hippocampal astrocytes, the heterodimer of KCNK2/TREK-1 and KCNK1/TWIK-1 allows passive K(+) conductance under basal conditions, but changes ion selectivity and becomes permeable to L-glutamate and Cl(-) ions upon binding to G-protein subunit GNG4 in stimulated astrocytes. Mediates rapid L-glutamate release in response to activation of G-protein-coupled receptors, such as F2R and CNR1. In hippocampal pyramidal neurons, the homodimer of KCNK2/TREK-1 contributes to gamma-aminobutyric acid (GABA) B-induced slow inhibitory postsynaptic potential. Associates with AKAP5 and Gs-protein-coupled receptor B2AR at postsynaptic dense bodies and converts to a leak channel no longer sensitive to stimulation by arachidonic acid, acidic pH or mechanical stress, nor inhibited by Gq-coupled receptors but still under the negative control of Gs-coupled receptors. Permeable to other monovalent cations such as Rb(+) and Cs(+). Does not display channel activity but reduces the channel activity of isoform 1 and isoform 2 and reduces cell surface expression of isoform 2. This chain is Potassium channel subfamily K member 2, found in Homo sapiens (Human).